Here is a 224-residue protein sequence, read N- to C-terminus: UPF0758 protein Tola_0183 (224 aa).

The 123-residue stretch at 102 to 224 (SLTSPQLVRR…PVSFAERGWL (123 aa)) folds into the MPN domain. The Zn(2+) site is built by His173, His175, and Asp186. The JAMM motif signature appears at 173–186 (HNHPSGVAEPSHAD).

This sequence belongs to the UPF0758 family.

The sequence is that of UPF0758 protein Tola_0183 from Tolumonas auensis (strain DSM 9187 / NBRC 110442 / TA 4).